A 63-amino-acid polypeptide reads, in one-letter code: High-potential iron-sulfur protein (63 aa).

[4Fe-4S] cluster contacts are provided by Cys23, Cys26, Cys41, and Cys56.

This sequence belongs to the high-potential iron-sulfur protein (HiPIP) family. As to quaternary structure, homodimer.

Functionally, specific class of high-redox-potential 4Fe-4S ferredoxins. Functions in anaerobic electron transport in most purple and in some other photosynthetic bacteria and in at least one genus (Paracoccus) of halophilic, denitrifying bacteria. This Rhodocyclus tenuis (Rhodospirillum tenue) protein is High-potential iron-sulfur protein (hip).